We begin with the raw amino-acid sequence, 368 residues long: Phosphate acyltransferase (368 aa).

Belongs to the PlsX family. Homodimer. Probably interacts with PlsY.

Its subcellular location is the cytoplasm. The catalysed reaction is a fatty acyl-[ACP] + phosphate = an acyl phosphate + holo-[ACP]. It functions in the pathway lipid metabolism; phospholipid metabolism. Its function is as follows. Catalyzes the reversible formation of acyl-phosphate (acyl-PO(4)) from acyl-[acyl-carrier-protein] (acyl-ACP). This enzyme utilizes acyl-ACP as fatty acyl donor, but not acyl-CoA. The protein is Phosphate acyltransferase of Granulibacter bethesdensis (strain ATCC BAA-1260 / CGDNIH1).